An 84-amino-acid chain; its full sequence is uncharacterized protein (84 aa).

Residues Ala7–Leu23 form a helical membrane-spanning segment.

The protein resides in the membrane. This is an uncharacterized protein from Haemophilus influenzae (strain ATCC 51907 / DSM 11121 / KW20 / Rd).